The chain runs to 484 residues: MTRKIMLQGTGSDVGKSVLVAGLCRLASNRGLSVKPFKPQNMSNNAAVSDDGGEIGRAQWLQALAARVPSSVHMNPVLLKPQSDVGSQVVVQGRVAGQARGKEYQALKPGLLGSVMESFELVSAGADLVIVEGAGSPAEINLRAGDIANMGFATRAGVPVVLVGDIDRGGVIASLVGTHAILSDEDRRMVTGYLINKFRGDVTLFDDGIASIRTFTGWPCFGVVPWLKSAGRLPAEDSVVLERLARGGGKALKVAVPVLSRIANFDDLDPLAAEPDVEIVFVRPGTPLPDDAALVVIPGSKSTIADLEDFRRQGWDRDLDRHIRRGGRVIGICGGYQMLGTRVIDPLGIEGGKREIEGLGLLSVETEMAPEKTVRNSRAWSREYGVLLEGYEIHLGRTAGIDCGRAPVEIDGRRDGAMSADGRVMGTYLHGLFGSDPYRAELLRSFGIEGGGGNYRQSVDAALDEIAAELDAVLDRVWLETLLG.

One can recognise a GATase cobBQ-type domain in the interval 251 to 438 (ALKVAVPVLS…LHGLFGSDPY (188 aa)). C333 acts as the Nucleophile in catalysis. The active site involves H430.

It belongs to the CobB/CobQ family. CobQ subfamily.

The protein operates within cofactor biosynthesis; adenosylcobalamin biosynthesis. Functionally, catalyzes amidations at positions B, D, E, and G on adenosylcobyrinic A,C-diamide. NH(2) groups are provided by glutamine, and one molecule of ATP is hydrogenolyzed for each amidation. The polypeptide is Cobyric acid synthase (Sinorhizobium medicae (strain WSM419) (Ensifer medicae)).